Reading from the N-terminus, the 142-residue chain is ATP synthase F(0) complex subunit C3, mitochondrial (142 aa).

The transit peptide at 1–67 directs the protein to the mitochondrion; that stretch reads MFACAKLACT…REFQTSAISR (67 aa). Residues 83 to 103 form a helical membrane-spanning segment; it reads VGVAGSGAGIGTVFGSLIIGY. Lys-110 carries the post-translational modification N6,N6,N6-trimethyllysine. The chain crosses the membrane as a helical span at residues 118 to 138; that stretch reads ILGFALSEAMGLFCLMVAFLI.

The protein belongs to the ATPase C chain family. F-type ATPases have 2 components, CF(1) - the catalytic core - and CF(0) - the membrane proton channel. CF(1) has five subunits: alpha(3), beta(3), gamma(1), delta(1), epsilon(1). CF(0) has three main subunits: a, b and c. Interacts with TMEM70 and TMEM242. Post-translationally, trimethylated by ATPSCKMT at Lys-110. Methylation is required for proper incorporation of the C subunit into the ATP synthase complex and mitochondrial respiration.

It is found in the mitochondrion membrane. Mitochondrial membrane ATP synthase (F(1)F(0) ATP synthase or Complex V) produces ATP from ADP in the presence of a proton gradient across the membrane which is generated by electron transport complexes of the respiratory chain. F-type ATPases consist of two structural domains, F(1) - containing the extramembraneous catalytic core and F(0) - containing the membrane proton channel, linked together by a central stalk and a peripheral stalk. During catalysis, ATP synthesis in the catalytic domain of F(1) is coupled via a rotary mechanism of the central stalk subunits to proton translocation. Part of the complex F(0) domain. A homomeric c-ring of probably 10 subunits is part of the complex rotary element. The sequence is that of ATP synthase F(0) complex subunit C3, mitochondrial from Homo sapiens (Human).